The chain runs to 129 residues: Histone H2B.2 (129 aa).

The segment covering 1–19 (MAPKAEKKPASKAPAEKKP) has biased composition (basic and acidic residues). The interval 1–37 (MAPKAEKKPASKAPAEKKPAAKKTASSDSKKRTKTRK) is disordered. 2 positions are modified to N6-acetyllysine; alternate: lysine 7 and lysine 8. Glycyl lysine isopeptide (Lys-Gly) (interchain with G-Cter in SUMO); alternate cross-links involve residues lysine 7 and lysine 8. Phosphoserine is present on serine 11. An N6-acetyllysine modification is found at lysine 12. At lysine 17 the chain carries N6-acetyllysine; alternate. Lysine 17 is covalently cross-linked (Glycyl lysine isopeptide (Lys-Gly) (interchain with G-Cter in SUMO); alternate). Lysine 18 participates in a covalent cross-link: Glycyl lysine isopeptide (Lys-Gly) (interchain with G-Cter in SUMO). Lysine 123 participates in a covalent cross-link: Glycyl lysine isopeptide (Lys-Gly) (interchain with G-Cter in ubiquitin).

It belongs to the histone H2B family. As to quaternary structure, the nucleosome is a histone octamer containing two molecules each of H2A, H2B, H3 and H4 assembled in one H3-H4 heterotetramer and two H2A-H2B heterodimers. The octamer wraps approximately 147 bp of DNA. In terms of processing, monoubiquitinated by the UBC2-BRE1 complex to form H2BK123ub1. H2BK123ub1 gives a specific tag for epigenetic transcriptional activation and is also prerequisite for H3K4me and H3K79me formation. H2BK123ub1 also modulates the formation of double-strand breaks during meiosis and is a prerequisite for DNA-damage checkpoint activation. Phosphorylated by STE20 to form H2BS10ph during progression through meiotic prophase. May be correlated with chromosome condensation. Post-translationally, acetylated by GCN5 to form H2BK11ac and H2BK16ac. H2BK16ac can also be formed by ESA1. Acetylation of N-terminal lysines and particularly formation of H2BK11acK16ac has a positive effect on transcription. In terms of processing, sumoylation to form H2BK6su or H2BK7su, and probably also H2BK16su or H2BK17su, occurs preferentially near the telomeres and represses gene transcription.

Its subcellular location is the nucleus. The protein resides in the chromosome. Core component of nucleosome. Nucleosomes wrap and compact DNA into chromatin, limiting DNA accessibility to the cellular machineries which require DNA as a template. Histones thereby play a central role in transcription regulation, DNA repair, DNA replication and chromosomal stability. DNA accessibility is regulated via a complex set of post-translational modifications of histones, also called histone code, and nucleosome remodeling. This chain is Histone H2B.2 (HTB2), found in Meyerozyma guilliermondii (strain ATCC 6260 / CBS 566 / DSM 6381 / JCM 1539 / NBRC 10279 / NRRL Y-324) (Yeast).